We begin with the raw amino-acid sequence, 893 residues long: Zinc finger protein 281 (893 aa).

Disordered regions lie at residues 1 to 113 (MKIG…FPSQ), 126 to 148 (IKQE…HHHY), 153 to 172 (AGAE…SHGV), and 198 to 251 (SGSR…GAVL). K2 participates in a covalent cross-link: Glycyl lysine isopeptide (Lys-Gly) (interchain with G-Cter in SUMO2). The span at 7–36 (FLSGGGGPSSSGGSGSGGSSGSASGGSGGG) shows a compositional bias: gly residues. Residues K100 and K127 each participate in a glycyl lysine isopeptide (Lys-Gly) (interchain with G-Cter in SUMO2) cross-link. A compositionally biased stretch (basic and acidic residues) spans 127–139 (KQEKPADPEEQPS). Over residues 161–170 (GLGGGEGGSH) the composition is skewed to gly residues. A compositionally biased stretch (basic and acidic residues) spans 201 to 216 (RTDEHGNQEPKQDANV). Residues K211, K217, K223, K230, K240, and K256 each participate in a glycyl lysine isopeptide (Lys-Gly) (interchain with G-Cter in SUMO2) cross-link. 3 C2H2-type zinc fingers span residues 258–280 (HICD…VLIH), 286–308 (FQCS…EKIH), and 314–336 (FGCD…KRTH). Residues K298 and K322 each participate in a glycyl lysine isopeptide (Lys-Gly) (interchain with G-Cter in SUMO2) cross-link. The C2H2-type 4; atypical zinc-finger motif lies at 342–364 (YKCDTCQQYFSRTDRLLKHRRTC). K370 participates in a covalent cross-link: Glycyl lysine isopeptide (Lys-Gly) (interchain with G-Cter in SUMO2). Residues 371 to 425 (GAASAEPGSSNHNSMGNLAVLSQGNTSSSRRKSKSKSIAIENKEHKTGKTNESQM) form a disordered region. Polar residues predominate over residues 377-396 (PGSSNHNSMGNLAVLSQGNT). S392 carries the phosphoserine modification. Residues K406, K413, K457, and K474 each participate in a glycyl lysine isopeptide (Lys-Gly) (interchain with G-Cter in SUMO2) cross-link. S481 carries the phosphoserine modification. Glycyl lysine isopeptide (Lys-Gly) (interchain with G-Cter in SUMO2) cross-links involve residues K490, K495, K536, K596, K614, and K619. The disordered stretch occupies residues 613-658 (GKSETQKEDPFNLTEPRVDLHTSGEHSELVQEENLSPGTQTPSNDK). The span at 616–641 (ETQKEDPFNLTEPRVDLHTSGEHSEL) shows a compositional bias: basic and acidic residues. Positions 645–658 (ENLSPGTQTPSNDK) are enriched in polar residues. S648 bears the Phosphoserine mark. Glycyl lysine isopeptide (Lys-Gly) (interchain with G-Cter in SUMO2) cross-links involve residues K658 and K667. Positions 775 to 813 (SSAFQSSSQKLTSQKEQQKNLESSTSFQIPSQELASQID) are enriched in polar residues. Residues 775 to 815 (SSAFQSSSQKLTSQKEQQKNLESSTSFQIPSQELASQIDPQ) form a disordered region. The residue at position 782 (S782) is a Phosphoserine. Residues K784, K789, and K793 each participate in a glycyl lysine isopeptide (Lys-Gly) (interchain with G-Cter in SUMO2) cross-link. At S805 the chain carries Phosphoserine. Residues K816 and K838 each participate in a glycyl lysine isopeptide (Lys-Gly) (interchain with G-Cter in SUMO2) cross-link. Phosphothreonine is present on T886.

The protein belongs to the krueppel C2H2-type zinc-finger protein family. In terms of assembly, interacts with NANOG. Associates with the NuRD complex.

Its subcellular location is the nucleus. Its function is as follows. Transcription repressor that plays a role in regulation of embryonic stem cells (ESCs) differentiation. Required for ESCs differentiation and acts by mediating autorepression of NANOG in ESCs: binds to the NANOG promoter and promotes association of NANOG protein to its own promoter and recruits the NuRD complex, which deacetylates histones. Not required for establishement and maintenance of ESCs. Represses the transcription of a number of genes including GAST, ODC1 and VIM. Binds to the G-rich box in the enhancer region of these genes. The chain is Zinc finger protein 281 (Znf281) from Mus musculus (Mouse).